A 207-amino-acid chain; its full sequence is Ribosomal RNA small subunit methyltransferase G (207 aa).

S-adenosyl-L-methionine-binding positions include Gly76, Gln81, 127–128, and Arg141; that span reads VE.

It belongs to the methyltransferase superfamily. RNA methyltransferase RsmG family.

Its subcellular location is the cytoplasm. The enzyme catalyses guanosine(527) in 16S rRNA + S-adenosyl-L-methionine = N(7)-methylguanosine(527) in 16S rRNA + S-adenosyl-L-homocysteine. Specifically methylates the N7 position of guanine in position 527 of 16S rRNA. This is Ribosomal RNA small subunit methyltransferase G from Neisseria meningitidis serogroup C / serotype 2a (strain ATCC 700532 / DSM 15464 / FAM18).